A 305-amino-acid chain; its full sequence is Dihydroorotate dehydrogenase B (NAD(+)), catalytic subunit (305 aa).

FMN-binding positions include S21 and 45–46 (KG). Residues K45 and 69 to 73 (NAVGL) contribute to the substrate site. Positions 99 and 127 each coordinate FMN. N127 is a substrate binding site. The active-site Nucleophile is the C130. FMN is bound by residues K165 and I191. A substrate-binding site is contributed by 192–193 (NT). FMN is bound by residues G217, 243 to 244 (GG), and 265 to 266 (GT).

Belongs to the dihydroorotate dehydrogenase family. Type 1 subfamily. As to quaternary structure, heterotetramer of 2 PyrK and 2 PyrD type B subunits. It depends on FMN as a cofactor.

Its subcellular location is the cytoplasm. The catalysed reaction is (S)-dihydroorotate + NAD(+) = orotate + NADH + H(+). It participates in pyrimidine metabolism; UMP biosynthesis via de novo pathway; orotate from (S)-dihydroorotate (NAD(+) route): step 1/1. Catalyzes the conversion of dihydroorotate to orotate with NAD(+) as electron acceptor. The polypeptide is Dihydroorotate dehydrogenase B (NAD(+)), catalytic subunit (pyrD) (Parabacteroides distasonis (strain ATCC 8503 / DSM 20701 / CIP 104284 / JCM 5825 / NCTC 11152)).